A 245-amino-acid chain; its full sequence is 8-amino-3,8-dideoxy-manno-octulosonate cytidylyltransferase (245 aa).

It belongs to the KdsB family.

The protein resides in the cytoplasm. The catalysed reaction is 8-amino-3,8-dideoxy-alpha-D-manno-octulosonate + CTP = CMP-8-amino-3,8-dideoxy-alpha-D-manno-oct-2-ulosonate + diphosphate. It participates in bacterial outer membrane biogenesis; lipopolysaccharide biosynthesis. Activates KDO8N (a required 8-carbon sugar) for incorporation into bacterial lipopolysaccharide in the Shewanella genus. The sequence is that of 8-amino-3,8-dideoxy-manno-octulosonate cytidylyltransferase from Shewanella halifaxensis (strain HAW-EB4).